A 644-amino-acid chain; its full sequence is 1-deoxy-D-xylulose-5-phosphate synthase (644 aa).

Thiamine diphosphate-binding positions include His-84 and 125–127 (GHS). Mg(2+) is bound at residue Asp-156. Thiamine diphosphate-binding positions include 157-158 (GA), Asn-185, Tyr-296, and Glu-378. Asn-185 is a binding site for Mg(2+).

Belongs to the transketolase family. DXPS subfamily. As to quaternary structure, homodimer. Mg(2+) serves as cofactor. Requires thiamine diphosphate as cofactor.

The enzyme catalyses D-glyceraldehyde 3-phosphate + pyruvate + H(+) = 1-deoxy-D-xylulose 5-phosphate + CO2. It participates in metabolic intermediate biosynthesis; 1-deoxy-D-xylulose 5-phosphate biosynthesis; 1-deoxy-D-xylulose 5-phosphate from D-glyceraldehyde 3-phosphate and pyruvate: step 1/1. Its function is as follows. Catalyzes the acyloin condensation reaction between C atoms 2 and 3 of pyruvate and glyceraldehyde 3-phosphate to yield 1-deoxy-D-xylulose-5-phosphate (DXP). This is 1-deoxy-D-xylulose-5-phosphate synthase from Paramagnetospirillum magneticum (strain ATCC 700264 / AMB-1) (Magnetospirillum magneticum).